The sequence spans 191 residues: Protein Ves (191 aa).

This sequence belongs to the Ves family.

The protein is Protein Ves of Escherichia coli O127:H6 (strain E2348/69 / EPEC).